The primary structure comprises 143 residues: Nucleoside diphosphate kinase (143 aa).

Residues lysine 11, phenylalanine 59, arginine 87, threonine 93, arginine 104, and asparagine 114 each contribute to the ATP site. The active-site Pros-phosphohistidine intermediate is the histidine 117.

This sequence belongs to the NDK family. In terms of assembly, homotetramer. Mg(2+) is required as a cofactor.

It localises to the cytoplasm. The enzyme catalyses dZDP + ATP = dZTP + ADP. It carries out the reaction a 2'-deoxyribonucleoside 5'-diphosphate + ATP = a 2'-deoxyribonucleoside 5'-triphosphate + ADP. The catalysed reaction is a ribonucleoside 5'-diphosphate + ATP = a ribonucleoside 5'-triphosphate + ADP. Its pathway is purine metabolism. Functionally, major role in the synthesis of nucleoside triphosphates other than ATP. The ATP gamma phosphate is transferred to the NDP beta phosphate via a ping-pong mechanism, using a phosphorylated active-site intermediate. In terms of biological role, (Microbial infection) Catalyzes the phosphorylation of dZDP to dZTP, when the bacterium is infected by a phage that produces the substrate for the synthesis of dZTP (2- amino-2'-deoxyadenosine 5'-triphosphate), which is then used by the phage as a DNA polymerase substrate. This Salmonella paratyphi C (strain RKS4594) protein is Nucleoside diphosphate kinase.